We begin with the raw amino-acid sequence, 422 residues long: La-related protein 6A (422 aa).

Positions 1–94 (MSSLPLRSGE…DHGENPVETD (94 aa)) are disordered. Low complexity predominate over residues 48–61 (VTESSDDVVVNVSE). Basic and acidic residues predominate over residues 73 to 89 (DHERNSGEDRDQDHGEN). The 92-residue stretch at 97 to 188 (VVPIDELNQK…KRLSPLPEIR (92 aa)) folds into the HTH La-type RNA-binding domain. Residues 193–283 (FTVLVENLPE…NGLRVKLLEQ (91 aa)) enclose the RRM domain. The disordered stretch occupies residues 286-422 (GKFAQRRPAR…PTSTQTSHEV (137 aa)). Residues 295-348 (RREVDKEKDTTGRVHDQTGGEKNKKTREHQNHRLHHSDNPADDDGGNHQKDKNG) are compositionally biased toward basic and acidic residues.

The protein resides in the nucleus. Transcriptional regulator. The chain is La-related protein 6A (LARP6A) from Arabidopsis thaliana (Mouse-ear cress).